The following is an 869-amino-acid chain: MTDTPAERPDPGVAGDADWAAQARPLLVHVDMRLCKRFDQGEPIERLVALRARAVDQLMRNAWMRCIPADSGLSLHAVGGYGRGELFPRSDVDVLVLGDTAAQQQHEQALARLFALLWDVGLPISHAVRSPAQCTAAAADQTVLTALIESRALVADAQARAALATAIAPPQVWPPRDFFQAKREELLARHQRFGDTADNLEPDIKDGPGGLRDLQTLGWMALRAFGVKDLEALVGLGHVGFDEAAALRREREELARLRFGLHIVANRPEERLRFDYQKTLAERLGFADDPESLGVEKMMQRFYRSAALIRRISDRLLQRFEEQFDGEATPEPLGGGFSLRRGYLAADTESWPDGDVLQVFALFAQWAAHREVRGLHSLTARALAEVLRDLPAYEVADATARERFMALLRGPRAVETLNRMARLGVLGQWIPAFASVSGRMQFDLFHVYTVDQHTLMVLRNIALFAAGRADEHFSIAHEVWPRLRKPELLLLAGLFHDIAKGRGGDHSELGAVDARAFCLAHRLSEGDTELVTWLVEQHLRMSVTAQKQDISDPEVIHRFATLVGTRERLDYLYLLTCADIAGTSPKLWNAWKDRLLADLYFAARRALREGLEHPPPREERLREARESARTLMQAQGHDDVTIDRQFAGMPDENFLRFRPEQLAWQAASLIEVEIGQTLVKARRAVPDNDALEVFVYSPDRDGLFAAIVATLDRKGYGIHRARVLDAPHDAIFDVFEVLPQETYADGDPQRLAATLRQVLAGDLQKVRPARRAVPRQLRHFRFAPRVEFSESAGGRRTRISLVAPDRPGLLADVAHVLRMQHLRVHDARIATFGERAEDQFQITDEHDRPLSESARQALRDALCACLDPV.

The interval 1-332 (MTDTPAERPD…QFDGEATPEP (332 aa)) is uridylyltransferase. Residues 333-691 (LGGGFSLRRG…RRAVPDNDAL (359 aa)) are uridylyl-removing. Positions 450–572 (VDQHTLMVLR…VGTRERLDYL (123 aa)) constitute an HD domain. 2 consecutive ACT domains span residues 692–774 (EVFV…RAVP) and 798–869 (RISL…LDPV).

The protein belongs to the GlnD family. Mg(2+) serves as cofactor.

It catalyses the reaction [protein-PII]-L-tyrosine + UTP = [protein-PII]-uridylyl-L-tyrosine + diphosphate. The catalysed reaction is [protein-PII]-uridylyl-L-tyrosine + H2O = [protein-PII]-L-tyrosine + UMP + H(+). Its activity is regulated as follows. Uridylyltransferase (UTase) activity is inhibited by glutamine, while glutamine activates uridylyl-removing (UR) activity. In terms of biological role, modifies, by uridylylation and deuridylylation, the PII regulatory proteins (GlnB and homologs), in response to the nitrogen status of the cell that GlnD senses through the glutamine level. Under low glutamine levels, catalyzes the conversion of the PII proteins and UTP to PII-UMP and PPi, while under higher glutamine levels, GlnD hydrolyzes PII-UMP to PII and UMP (deuridylylation). Thus, controls uridylylation state and activity of the PII proteins, and plays an important role in the regulation of nitrogen assimilation and metabolism. This chain is Bifunctional uridylyltransferase/uridylyl-removing enzyme, found in Xanthomonas axonopodis pv. citri (strain 306).